A 237-amino-acid chain; its full sequence is Lysophospholipase-like protein 1 (237 aa).

At Ala-2 the chain carries N-acetylalanine. Active-site charge relay system residues include Ser-124, Asp-179, and His-211.

This sequence belongs to the AB hydrolase superfamily. AB hydrolase 2 family.

The protein resides in the cytoplasm. It localises to the cytosol. It carries out the reaction S-hexadecanoyl-L-cysteinyl-[protein] + H2O = L-cysteinyl-[protein] + hexadecanoate + H(+). Palmitoyl thioesterase that catalyzes depalmitoylation of CGAS and KCNMA1. Acts as a regulator of innate immunity by mediating depalmitoylation of CGAS, thereby preventing CGAS homodimerization and cyclic GMP-AMP synthase activity. Does not exhibit phospholipase nor triacylglycerol lipase activity, able to hydrolyze only short chain substrates due to its shallow active site. This is Lysophospholipase-like protein 1 from Pongo abelii (Sumatran orangutan).